The chain runs to 63 residues: Jingdongin-1-MT1 (63 aa).

The N-terminal stretch at 1–22 (MFTLKKSLLLLFFLGTINLSLC) is a signal peptide. Residues 23-44 (EQERDADEEERRDDDEMDVEVE) constitute a propeptide, removed in mature form. A disulfide bridge links Cys57 with Cys63.

It belongs to the frog skin active peptide (FSAP) family. Brevinin subfamily. As to expression, expressed by the skin glands.

The protein localises to the secreted. Its function is as follows. Antimicrobial peptide. Active against some Gram-negative and a variety of Gram-positive bacterial strains. Active against fungus C.glabrata 090902 but not against C.neoformans 201211. Shows hemolytic activity against human erythrocytes. The chain is Jingdongin-1-MT1 from Amolops mantzorum (Sichuan torrent frog).